The primary structure comprises 63 residues: Large ribosomal subunit protein uL29 (63 aa).

It belongs to the universal ribosomal protein uL29 family.

In Actinobacillus succinogenes (strain ATCC 55618 / DSM 22257 / CCUG 43843 / 130Z), this protein is Large ribosomal subunit protein uL29.